The sequence spans 239 residues: Lysophospholipase-like protein 1 (239 aa).

A2 is modified (N-acetylalanine). Residues S125, D180, and H212 each act as charge relay system in the active site.

It belongs to the AB hydrolase superfamily. AB hydrolase 2 family.

The protein localises to the cytoplasm. Its subcellular location is the cytosol. The catalysed reaction is S-hexadecanoyl-L-cysteinyl-[protein] + H2O = L-cysteinyl-[protein] + hexadecanoate + H(+). In terms of biological role, palmitoyl thioesterase that catalyzes depalmitoylation of CGAS and KCNMA1. Acts as a regulator of innate immunity by mediating depalmitoylation of CGAS, thereby preventing CGAS homodimerization and cyclic GMP-AMP synthase activity. Does not exhibit phospholipase nor triacylglycerol lipase activity, able to hydrolyze only short chain substrates due to its shallow active site. This Mus musculus (Mouse) protein is Lysophospholipase-like protein 1.